Reading from the N-terminus, the 216-residue chain is Lipoprotein-releasing system ATP-binding protein LolD (216 aa).

An ABC transporter domain is found at 2–216 (IHLEGITKSF…TIHMVDGNII (215 aa)). Residue 34–41 (GPSGAGKT) coordinates ATP.

This sequence belongs to the ABC transporter superfamily. Lipoprotein translocase (TC 3.A.1.125) family. As to quaternary structure, the complex is composed of two ATP-binding proteins (LolD) and two transmembrane proteins (LolC and LolE).

Its subcellular location is the cell inner membrane. Its function is as follows. Part of the ABC transporter complex LolCDE involved in the translocation of mature outer membrane-directed lipoproteins, from the inner membrane to the periplasmic chaperone, LolA. Responsible for the formation of the LolA-lipoprotein complex in an ATP-dependent manner. The protein is Lipoprotein-releasing system ATP-binding protein LolD of Bacteroides fragilis (strain YCH46).